The primary structure comprises 144 residues: 3-hydroxyacyl-[acyl-carrier-protein] dehydratase FabZ (144 aa).

H48 is an active-site residue.

It belongs to the thioester dehydratase family. FabZ subfamily.

The protein localises to the cytoplasm. It carries out the reaction a (3R)-hydroxyacyl-[ACP] = a (2E)-enoyl-[ACP] + H2O. Its function is as follows. Involved in unsaturated fatty acids biosynthesis. Catalyzes the dehydration of short chain beta-hydroxyacyl-ACPs and long chain saturated and unsaturated beta-hydroxyacyl-ACPs. This is 3-hydroxyacyl-[acyl-carrier-protein] dehydratase FabZ from Bacillus licheniformis (strain ATCC 14580 / DSM 13 / JCM 2505 / CCUG 7422 / NBRC 12200 / NCIMB 9375 / NCTC 10341 / NRRL NRS-1264 / Gibson 46).